The sequence spans 98 residues: Large ribosomal subunit protein uL23 (98 aa).

It belongs to the universal ribosomal protein uL23 family. In terms of assembly, part of the 50S ribosomal subunit. Contacts protein L29, and trigger factor when it is bound to the ribosome.

One of the early assembly proteins it binds 23S rRNA. One of the proteins that surrounds the polypeptide exit tunnel on the outside of the ribosome. Forms the main docking site for trigger factor binding to the ribosome. This Streptococcus pyogenes serotype M1 protein is Large ribosomal subunit protein uL23.